The sequence spans 415 residues: uncharacterized protein (415 aa).

The region spanning Met1 to Ser55 is the TRAM domain. Positions 63, 75, 78, and 152 each coordinate [4Fe-4S] cluster. S-adenosyl-L-methionine contacts are provided by Gln252, Phe279, Glu299, and Asp347. Catalysis depends on Cys373, which acts as the Nucleophile.

It belongs to the class I-like SAM-binding methyltransferase superfamily. RNA M5U methyltransferase family.

This is an uncharacterized protein from Rhizobium meliloti (strain 1021) (Ensifer meliloti).